Here is a 305-residue protein sequence, read N- to C-terminus: Oxygen-dependent coproporphyrinogen-III oxidase (305 aa).

Substrate is bound at residue Ser98. His102 and His112 together coordinate a divalent metal cation. His112 (proton donor) is an active-site residue. Position 114–116 (114–116) interacts with substrate; that stretch reads NVR. Residues His151 and His181 each coordinate a divalent metal cation. The tract at residues 246 to 281 is important for dimerization; that stretch reads YVEFNLVYDRGTLFGLQSGGRTESILMSMPPLARWE. 264 to 266 is a binding site for substrate; that stretch reads GGR.

The protein belongs to the aerobic coproporphyrinogen-III oxidase family. As to quaternary structure, homodimer. A divalent metal cation is required as a cofactor.

The protein resides in the cytoplasm. It carries out the reaction coproporphyrinogen III + O2 + 2 H(+) = protoporphyrinogen IX + 2 CO2 + 2 H2O. It functions in the pathway porphyrin-containing compound metabolism; protoporphyrin-IX biosynthesis; protoporphyrinogen-IX from coproporphyrinogen-III (O2 route): step 1/1. Functionally, involved in the heme biosynthesis. Catalyzes the aerobic oxidative decarboxylation of propionate groups of rings A and B of coproporphyrinogen-III to yield the vinyl groups in protoporphyrinogen-IX. This is Oxygen-dependent coproporphyrinogen-III oxidase from Vibrio vulnificus (strain CMCP6).